Consider the following 1434-residue polypeptide: MGARASVLSGGELDKWEKIRLRPGGKKKYQLKHIVWASRELERFAINPGLLETSEGCRQILGQLQPSLKTGSEEIRSLYNTVATLYCVHQKIEVKDTKEALDKIEEEQNKSKKKAQQTAADTGNSSQVSQNYPIVQNLQGQMVHQPISPRTLNAWVKVVEEKAFSPEVIPMFSALAEGATPQDLNTMLNTVGGHQAAMQMLKETINEEAAEWDRLHPVHAGPIAPGQMREPRGSDIAGTTSTLQEQIGWMTNNPPIPVGEIYKRWIILGLNKIVRMYSPTSILDIRQGPKEPFRDYVDRFYKTLRAEQASQDVKNWMTETLLVQNANPDCKTILKALGPAATLEEMMTACQGVGGPGHKARVLAEAMSQVNSVTVMMQKGNFKNQRKTVKCFNCGKEGHIAKNCRAPRKKGCWKCGREGHQMKDCTERQANFLREDLAFPQGKAREFSSEQTRANSPTSRELRVWGRDNNSPSEAGADRQGTVSFNLPQITLWQRPIVTIKIGGQLKEALLDTGADDTVLEEMNLPGRWKPKMIGGIGGFIKVRQYDQILIEICGHKAIGTVLVGPTPVNIIGRNLLTQLGCTLNFPISPIETVPVKLKPGMDGPKVKQWPLTEEKIKVLIEICTEMEKEGKISKVGPENPYNTPVFAIKKKDSTKWRKLVDFRELNKRTQDFWEVQLGIPHPAGLKKKKSVTVLDVGDAYFSVPLDKDFRKYTAFTIPSINNETPGIRYQYNVLPQGWKGSPAIFQSSMTKILEPFRKQNPDIVIYQYMDDLYVGSDLEIGQHRTKIEELRQHLLRWGFTTPDKKHQKEPPFLWMGYELHPDKWTVQPIMLPEKDSWTVNDIQKLVGKLNWASQIYAGIKVKNLCKLLRGTKALTEVIPLTEEAELELAENREILKEPVHGVYYDPSKDLVAELQKQGQGQWTYQIYQEPFKNLKTGKYARMRGAHTNDVKQLTEAVQKITQESIVIWGKTPKFKLPIQKETWEAWWTEYWQATWIPEWEFVNTPPLVKLWYQLEKDPIVGAETFYVDGAANRETKLGKAGYVTDRGRQKVVSLTDTTNQKTELQAIHLALQDSGLEVNIVTDSQYALGIIQAQPDKSESELVSQIIEQLIKKEKVYLAWVPAHKGIGGNEQVDKLVSAGIRKVLFLDGIDKAQEEHEKYHSNWRAMASDFNLPPVVAKEIVASCDKCQLKGEAMHGQVDCSPGIWQLDCTHLEGKIILVAVHVASGYIEAEVIPAETGQETAYFILKLAGRWPVKTIHTDNGSNFTSTTVKAACWWAGIKQEFGIPYNPQSQGVVESMNNELKKIIGQVRDQAEHLKTAVQMAVFIHNFKRKGGIGGYSAGERIVDIIATDIQTKELQKQITKIQNFRVYYRDSREPLWKGPAKLLWKGEGAVVIQDNSDIKVVPRRKAKIIRDYGKQMAGDDCVASRQDED.

The N-myristoyl glycine; by host moiety is linked to residue glycine 2. Residues 7–31 are interaction with Gp41; that stretch reads VLSGGELDKWEKIRLRPGGKKKYQL. The interaction with host CALM1 stretch occupies residues 8-43; that stretch reads LSGGELDKWEKIRLRPGGKKKYQLKHIVWASRELER. Residues 12–19 are interaction with host AP3D1; it reads ELDKWEKI. The interaction with membrane phosphatidylinositol 4,5-bisphosphate and RNA stretch occupies residues 14-33; the sequence is DKWEKIRLRPGGKKKYQLKH. Positions 16–22 match the Nuclear export signal motif; the sequence is WEKIRLR. A Nuclear localization signal motif is present at residues 26–32; the sequence is KKKYQLK. Residues 73–77 form an interaction with membrane phosphatidylinositol 4,5-bisphosphate region; the sequence is EEIRS. Positions 106–128 are disordered; that stretch reads EEQNKSKKKAQQTAADTGNSSQV. Positions 116-128 are enriched in polar residues; that stretch reads QQTAADTGNSSQV. Position 132 is a phosphotyrosine; by host (tyrosine 132). The tract at residues 189 to 227 is interaction with human PPIA/CYPA and NUP153; that stretch reads NTVGGHQAAMQMLKETINEEAAEWDRLHPVHAGPIAPGQ. Positions 277–363 are dimerization/Multimerization of capsid protein p24; sequence YSPTSILDIR…GGPGHKARVL (87 aa). 2 consecutive CCHC-type zinc fingers follow at residues 389–406 and 410–427; these read VKCFNCGKEGHIAKNCRA and KGCWKCGREGHQMKDCTE. Residues 443–480 form a disordered region; it reads KAREFSSEQTRANSPTSRELRVWGRDNNSPSEAGADRQ. Residues 449 to 459 show a composition bias toward polar residues; sequence SEQTRANSPTS. The dimerization of protease stretch occupies residues 488–492; sequence PQITL. The Peptidase A2 domain occupies 507 to 576; that stretch reads KEALLDTGAD…TPVNIIGRNL (70 aa). Catalysis depends on aspartate 512, which acts as the For protease activity; shared with dimeric partner. 2 dimerization of protease regions span residues 536–542 and 575–587; these read GIGGFIK and NLLTQLGCTLNFP. A Reverse transcriptase domain is found at 630–820; it reads EGKISKVGPE…PPFLWMGYEL (191 aa). 3 residues coordinate Mg(2+): aspartate 696, aspartate 771, and aspartate 772. The segment at 813-821 is RT 'primer grip'; that stretch reads FLWMGYELH. The short motif at 984–1000 is the Tryptophan repeat motif element; sequence WEAWWTEYWQATWIPEW. Positions 1020–1143 constitute an RNase H type-1 domain; it reads IVGAETFYVD…VDKLVSAGIR (124 aa). Residues aspartate 1029, glutamate 1064, aspartate 1084, and aspartate 1135 each contribute to the Mg(2+) site. An Integrase-type zinc finger spans residues 1149–1190; the sequence is DGIDKAQEEHEKYHSNWRAMASDFNLPPVVAKEIVASCDKCQ. Zn(2+) contacts are provided by histidine 1158, histidine 1162, cysteine 1186, and cysteine 1189. Residues 1200–1350 enclose the Integrase catalytic domain; that stretch reads VDCSPGIWQL…SAGERIVDII (151 aa). Mg(2+)-binding residues include aspartate 1210, aspartate 1262, and glutamate 1298. The segment at residues 1369 to 1416 is a DNA-binding region (integrase-type); the sequence is FRVYYRDSREPLWKGPAKLLWKGEGAVVIQDNSDIKVVPRRKAKIIRD.

As to quaternary structure, homotrimer; further assembles as hexamers of trimers. Interacts with gp41 (via C-terminus). Interacts with host CALM1; this interaction induces a conformational change in the Matrix protein, triggering exposure of the myristate group. Interacts with host AP3D1; this interaction allows the polyprotein trafficking to multivesicular bodies during virus assembly. Part of the pre-integration complex (PIC) which is composed of viral genome, matrix protein, Vpr and integrase. Homodimer; the homodimer further multimerizes as homohexamers or homopentamers. Interacts with human PPIA/CYPA; This interaction stabilizes the capsid. Interacts with human NUP153. Interacts with host PDZD8; this interaction stabilizes the capsid. Interacts with monkey TRIM5; this interaction destabilizes the capsid. In terms of assembly, homodimer, whose active site consists of two apposed aspartic acid residues. As to quaternary structure, heterodimer of p66 RT and p51 RT (RT p66/p51). Heterodimerization of RT is essential for DNA polymerase activity. The overall folding of the subdomains is similar in p66 RT and p51 RT but the spatial arrangements of the subdomains are dramatically different. Homotetramer; may further associate as a homohexadecamer. Part of the pre-integration complex (PIC) which is composed of viral genome, matrix protein, Vpr and integrase. Interacts with human SMARCB1/INI1 and human PSIP1/LEDGF isoform 1. Interacts with human KPNA3; this interaction might play a role in nuclear import of the pre-integration complex. Interacts with human NUP153; this interaction might play a role in nuclear import of the pre-integration complex. Requires Mg(2+) as cofactor. Specific enzymatic cleavages by the viral protease yield mature proteins. The protease is released by autocatalytic cleavage. The polyprotein is cleaved during and after budding, this process is termed maturation. Proteolytic cleavage of p66 RT removes the RNase H domain to yield the p51 RT subunit. Nucleocapsid protein p7 might be further cleaved after virus entry. In terms of processing, tyrosine phosphorylated presumably in the virion by a host kinase. Phosphorylation is apparently not a major regulator of membrane association. Post-translationally, phosphorylated possibly by host MAPK1; this phosphorylation is necessary for Pin1-mediated virion uncoating. Methylated by host PRMT6, impairing its function by reducing RNA annealing and the initiation of reverse transcription.

Its subcellular location is the host cell membrane. It is found in the host endosome. It localises to the host multivesicular body. The protein localises to the virion membrane. The protein resides in the host nucleus. Its subcellular location is the host cytoplasm. It is found in the virion. The catalysed reaction is Specific for a P1 residue that is hydrophobic, and P1' variable, but often Pro.. It carries out the reaction Endohydrolysis of RNA in RNA/DNA hybrids. Three different cleavage modes: 1. sequence-specific internal cleavage of RNA. Human immunodeficiency virus type 1 and Moloney murine leukemia virus enzymes prefer to cleave the RNA strand one nucleotide away from the RNA-DNA junction. 2. RNA 5'-end directed cleavage 13-19 nucleotides from the RNA end. 3. DNA 3'-end directed cleavage 15-20 nucleotides away from the primer terminus.. It catalyses the reaction 3'-end directed exonucleolytic cleavage of viral RNA-DNA hybrid.. The enzyme catalyses DNA(n) + a 2'-deoxyribonucleoside 5'-triphosphate = DNA(n+1) + diphosphate. Protease: The viral protease is inhibited by many synthetic protease inhibitors (PIs), such as amprenavir, atazanavir, indinavir, loprinavir, nelfinavir, ritonavir and saquinavir. Use of protease inhibitors in tritherapy regimens permit more ambitious therapeutic strategies. Reverse transcriptase/ribonuclease H: RT can be inhibited either by nucleoside RT inhibitors (NRTIs) or by non nucleoside RT inhibitors (NNRTIs). NRTIs act as chain terminators, whereas NNRTIs inhibit DNA polymerization by binding a small hydrophobic pocket near the RT active site and inducing an allosteric change in this region. Classical NRTIs are abacavir, adefovir (PMEA), didanosine (ddI), lamivudine (3TC), stavudine (d4T), tenofovir (PMPA), zalcitabine (ddC), and zidovudine (AZT). Classical NNRTIs are atevirdine (BHAP U-87201E), delavirdine, efavirenz (DMP-266), emivirine (I-EBU), and nevirapine (BI-RG-587). The tritherapies used as a basic effective treatment of AIDS associate two NRTIs and one NNRTI. Its function is as follows. Mediates, with Gag polyprotein, the essential events in virion assembly, including binding the plasma membrane, making the protein-protein interactions necessary to create spherical particles, recruiting the viral Env proteins, and packaging the genomic RNA via direct interactions with the RNA packaging sequence (Psi). Gag-Pol polyprotein may regulate its own translation, by the binding genomic RNA in the 5'-UTR. At low concentration, the polyprotein would promote translation, whereas at high concentration, the polyprotein would encapsidate genomic RNA and then shut off translation. In terms of biological role, targets the polyprotein to the plasma membrane via a multipartite membrane-binding signal, that includes its myristoylated N-terminus. Matrix protein is part of the pre-integration complex. Implicated in the release from host cell mediated by Vpu. Binds to RNA. Functionally, forms the conical core that encapsulates the genomic RNA-nucleocapsid complex in the virion. Most core are conical, with only 7% tubular. The core is constituted by capsid protein hexamer subunits. The core is disassembled soon after virion entry. Host restriction factors such as TRIM5-alpha or TRIMCyp bind retroviral capsids and cause premature capsid disassembly, leading to blocks in reverse transcription. Capsid restriction by TRIM5 is one of the factors which restricts HIV-1 to the human species. Host PIN1 apparently facilitates the virion uncoating. On the other hand, interactions with PDZD8 or CYPA stabilize the capsid. Encapsulates and protects viral dimeric unspliced genomic RNA (gRNA). Binds these RNAs through its zinc fingers. Acts as a nucleic acid chaperone which is involved in rearangement of nucleic acid secondary structure during gRNA retrotranscription. Also facilitates template switch leading to recombination. As part of the polyprotein, participates in gRNA dimerization, packaging, tRNA incorporation and virion assembly. Its function is as follows. Aspartyl protease that mediates proteolytic cleavages of Gag and Gag-Pol polyproteins during or shortly after the release of the virion from the plasma membrane. Cleavages take place as an ordered, step-wise cascade to yield mature proteins. This process is called maturation. Displays maximal activity during the budding process just prior to particle release from the cell. Also cleaves Nef and Vif, probably concomitantly with viral structural proteins on maturation of virus particles. Hydrolyzes host EIF4GI and PABP1 in order to shut off the capped cellular mRNA translation. The resulting inhibition of cellular protein synthesis serves to ensure maximal viral gene expression and to evade host immune response. Also mediates cleavage of host YTHDF3. Mediates cleavage of host CARD8, thereby activating the CARD8 inflammasome, leading to the clearance of latent HIV-1 in patient CD4(+) T-cells after viral reactivation; in contrast, HIV-1 can evade CARD8-sensing when its protease remains inactive in infected cells prior to viral budding. In terms of biological role, multifunctional enzyme that converts the viral RNA genome into dsDNA in the cytoplasm, shortly after virus entry into the cell. This enzyme displays a DNA polymerase activity that can copy either DNA or RNA templates, and a ribonuclease H (RNase H) activity that cleaves the RNA strand of RNA-DNA heteroduplexes in a partially processive 3' to 5' endonucleasic mode. Conversion of viral genomic RNA into dsDNA requires many steps. A tRNA(3)-Lys binds to the primer-binding site (PBS) situated at the 5'-end of the viral RNA. RT uses the 3' end of the tRNA primer to perform a short round of RNA-dependent minus-strand DNA synthesis. The reading proceeds through the U5 region and ends after the repeated (R) region which is present at both ends of viral RNA. The portion of the RNA-DNA heteroduplex is digested by the RNase H, resulting in a ssDNA product attached to the tRNA primer. This ssDNA/tRNA hybridizes with the identical R region situated at the 3' end of viral RNA. This template exchange, known as minus-strand DNA strong stop transfer, can be either intra- or intermolecular. RT uses the 3' end of this newly synthesized short ssDNA to perform the RNA-dependent minus-strand DNA synthesis of the whole template. RNase H digests the RNA template except for two polypurine tracts (PPTs) situated at the 5'-end and near the center of the genome. It is not clear if both polymerase and RNase H activities are simultaneous. RNase H probably can proceed both in a polymerase-dependent (RNA cut into small fragments by the same RT performing DNA synthesis) and a polymerase-independent mode (cleavage of remaining RNA fragments by free RTs). Secondly, RT performs DNA-directed plus-strand DNA synthesis using the PPTs that have not been removed by RNase H as primers. PPTs and tRNA primers are then removed by RNase H. The 3' and 5' ssDNA PBS regions hybridize to form a circular dsDNA intermediate. Strand displacement synthesis by RT to the PBS and PPT ends produces a blunt ended, linear dsDNA copy of the viral genome that includes long terminal repeats (LTRs) at both ends. Functionally, catalyzes viral DNA integration into the host chromosome, by performing a series of DNA cutting and joining reactions. This enzyme activity takes place after virion entry into a cell and reverse transcription of the RNA genome in dsDNA. The first step in the integration process is 3' processing. This step requires a complex comprising the viral genome, matrix protein, Vpr and integrase. This complex is called the pre-integration complex (PIC). The integrase protein removes 2 nucleotides from each 3' end of the viral DNA, leaving recessed CA OH's at the 3' ends. In the second step, the PIC enters cell nucleus. This process is mediated through integrase and Vpr proteins, and allows the virus to infect a non dividing cell. This ability to enter the nucleus is specific of lentiviruses, other retroviruses cannot and rely on cell division to access cell chromosomes. In the third step, termed strand transfer, the integrase protein joins the previously processed 3' ends to the 5' ends of strands of target cellular DNA at the site of integration. The 5'-ends are produced by integrase-catalyzed staggered cuts, 5 bp apart. A Y-shaped, gapped, recombination intermediate results, with the 5'-ends of the viral DNA strands and the 3' ends of target DNA strands remaining unjoined, flanking a gap of 5 bp. The last step is viral DNA integration into host chromosome. This involves host DNA repair synthesis in which the 5 bp gaps between the unjoined strands are filled in and then ligated. Since this process occurs at both cuts flanking the HIV genome, a 5 bp duplication of host DNA is produced at the ends of HIV-1 integration. Alternatively, Integrase may catalyze the excision of viral DNA just after strand transfer, this is termed disintegration. In Homo sapiens (Human), this protein is Gag-Pol polyprotein (gag-pol).